The primary structure comprises 285 residues: Heme oxygenase 3, chloroplastic (285 aa).

A chloroplast-targeting transit peptide spans 1-58; sequence MATTRLNPSCHFPASTRLSCESYLGLRTTGRISYARTLTAPRGYLAVKANGGQASVVT. A heme b-binding site is contributed by H89. Positions 89 to 105 are enriched in basic and acidic residues; that stretch reads HTKDQAREGEKESRSPE. The tract at residues 89–109 is disordered; it reads HTKDQAREGEKESRSPEEGPV.

Belongs to the heme oxygenase family. In terms of tissue distribution, widely expressed at low levels.

The protein resides in the plastid. Its subcellular location is the chloroplast. The enzyme catalyses heme b + 3 reduced [NADPH--hemoprotein reductase] + 3 O2 = biliverdin IXalpha + CO + Fe(2+) + 3 oxidized [NADPH--hemoprotein reductase] + 3 H2O + H(+). In terms of biological role, catalyzes the opening of the heme ring to form the open-chain tetrapyrrole biliverdin IX with the release of iron and carbon monoxide (CO). Produces specifically the biliverdin IX-alpha isomer. Plays a minor role in phytochrome assembly and photomorphogenesis. The sequence is that of Heme oxygenase 3, chloroplastic (HO3) from Arabidopsis thaliana (Mouse-ear cress).